The primary structure comprises 454 residues: Bifunctional protein GlmU (454 aa).

A pyrophosphorylase region spans residues 1 to 226 (MSLEIVILAA…AMEVQGVNDR (226 aa)). Residues 8 to 11 (LAAG), lysine 22, glutamine 73, 78 to 79 (GT), 99 to 101 (YGD), glycine 136, glutamate 151, asparagine 166, and asparagine 224 each bind UDP-N-acetyl-alpha-D-glucosamine. Residue aspartate 101 participates in Mg(2+) binding. Asparagine 224 provides a ligand contact to Mg(2+). Residues 227–247 (MQQAQLERHYQRLRAEELMRQ) form a linker region. The interval 248–454 (GVTLLDPQRL…NWKRPEKIKK (207 aa)) is N-acetyltransferase. 2 residues coordinate UDP-N-acetyl-alpha-D-glucosamine: arginine 330 and lysine 348. The active-site Proton acceptor is the histidine 360. Positions 363 and 374 each coordinate UDP-N-acetyl-alpha-D-glucosamine. Acetyl-CoA is bound by residues alanine 377, 383-384 (NY), serine 402, alanine 420, and arginine 437.

This sequence in the N-terminal section; belongs to the N-acetylglucosamine-1-phosphate uridyltransferase family. It in the C-terminal section; belongs to the transferase hexapeptide repeat family. Homotrimer. It depends on Mg(2+) as a cofactor.

It localises to the cytoplasm. It carries out the reaction alpha-D-glucosamine 1-phosphate + acetyl-CoA = N-acetyl-alpha-D-glucosamine 1-phosphate + CoA + H(+). The enzyme catalyses N-acetyl-alpha-D-glucosamine 1-phosphate + UTP + H(+) = UDP-N-acetyl-alpha-D-glucosamine + diphosphate. It participates in nucleotide-sugar biosynthesis; UDP-N-acetyl-alpha-D-glucosamine biosynthesis; N-acetyl-alpha-D-glucosamine 1-phosphate from alpha-D-glucosamine 6-phosphate (route II): step 2/2. It functions in the pathway nucleotide-sugar biosynthesis; UDP-N-acetyl-alpha-D-glucosamine biosynthesis; UDP-N-acetyl-alpha-D-glucosamine from N-acetyl-alpha-D-glucosamine 1-phosphate: step 1/1. The protein operates within bacterial outer membrane biogenesis; LPS lipid A biosynthesis. Functionally, catalyzes the last two sequential reactions in the de novo biosynthetic pathway for UDP-N-acetylglucosamine (UDP-GlcNAc). The C-terminal domain catalyzes the transfer of acetyl group from acetyl coenzyme A to glucosamine-1-phosphate (GlcN-1-P) to produce N-acetylglucosamine-1-phosphate (GlcNAc-1-P), which is converted into UDP-GlcNAc by the transfer of uridine 5-monophosphate (from uridine 5-triphosphate), a reaction catalyzed by the N-terminal domain. In Pseudomonas aeruginosa (strain LESB58), this protein is Bifunctional protein GlmU.